The sequence spans 395 residues: Methylmalonyl-CoA decarboxylase subunit beta (395 aa).

9 helical membrane-spanning segments follow: residues 17–37 (LNMGSIIMMLVACVFLYLAIA), 43–63 (LLLVPISFGILLTNLPFAGMM), 103–123 (GIFPPLIFLGVGAMTDFGPLI), 128–148 (SLLLGAAAQFGIFVTFFGAIA), 180–200 (PHLMGPIAVAAYSYMALVPII), 230–250 (IIFPIVVTILVSLIVPPAATL), 278–298 (INIITIFLGVTVGATATAEAF), 304–324 (LAILGLGIVAFGIGTGSGVLL), and 374–394 (GPNVAGVIGSAVSAGVLLSLF).

Belongs to the GcdB/MmdB/OadB family. In terms of assembly, the methylmalonyl-CoA decarboxylase is composed of four subunits: the carboxyltransferase alpha subunit (MmdA), the tunnel beta subunit (MmdB), the biotin-containing gamma subunit (MmdC) and the delta subunit (MmdD). In terms of processing, the N-terminus is blocked.

Its subcellular location is the cell membrane. The catalysed reaction is (S)-methylmalonyl-CoA + Na(+)(in) + H(+)(out) = propanoyl-CoA + Na(+)(out) + CO2. Functionally, tunnel subunit of the sodium ion pump methylmalonyl-CoA decarboxylase, which converts the chemical energy of a decarboxylation reaction into an electrochemical gradient of Na(+) ions across the cytoplasmic membrane, thereby creating a sodium ion motive force that is used for ATP synthesis. The beta subunit catalyzes the decarboxylation of the carboxybiotin carrier protein and the coupled export of Na(+) ions. This chain is Methylmalonyl-CoA decarboxylase subunit beta, found in Propionigenium modestum.